Consider the following 344-residue polypeptide: Nuclear distribution protein nudE homolog 1 (344 aa).

Residues 1 to 93 (MEDSGKTFES…MQHSEGYRQI (93 aa)) are self-association. A coiled-coil region spans residues 18–188 (WRDLAMTYKQ…ELAVQQKQDK (171 aa)). An interaction with PAFAH1B1 region spans residues 88-156 (EGYRQISALE…ERNAFLESEL (69 aa)). The interaction with CENPF stretch occupies residues 167 to 290 (QRLKDEARDL…QSPSRTSGPA (124 aa)). Residues 181-246 (AVQQKQDKPR…DSSTSGTPLT (66 aa)) are disordered. Ser211 is modified (phosphoserine). Phosphothreonine is present on residues Thr215 and Thr228. Ser239 carries the phosphoserine modification. Residues Thr243 and Thr246 each carry the phosphothreonine modification. A lipid anchor (S-palmitoyl cysteine; by ZDHHC2, ZDHHC3 and ZDHHC7) is attached at Cys274. Over residues 279-289 (YDQSPSRTSGP) the composition is skewed to polar residues. Residues 279 to 337 (YDQSPSRTSGPASGRGTKNRDGVDRRPGSTSVGDKGSGKRLEFGKPASEPASPALPSAQ) form a disordered region. Position 282 is a phosphoserine (Ser282). Residues 296–305 (KNRDGVDRRP) show a composition bias toward basic and acidic residues. Ser309 carries the phosphoserine modification. Residues 324 to 336 (PASEPASPALPSA) are compositionally biased toward low complexity.

This sequence belongs to the nudE family. Homodimer. Interacts with dynactin and PCM1. Interacts with CENPF, LIS1, CNTRL, dynein, tubulin gamma, PAFAH1B1, PCNT, SLMAP and TCP1. Interacts with ZNF365. Interacts with RAB9A; the interaction leads to RAB9A-dynein motor tethering. Interacts (via C-terminus) with MCRS1 (via C-terminus); phosphorylation of NDE1 inhibits the interaction. Post-translationally, phosphorylated in mitosis. Phosphorylation at Thr-246 is essential for the G2/M transition. Highly expressed in ovary. Also expressed in brain, heart, kidney, large intestine, liver, lung, small intestine and testis.

The protein resides in the cytoplasm. It localises to the cytoskeleton. Its subcellular location is the microtubule organizing center. It is found in the centrosome. The protein localises to the spindle. The protein resides in the chromosome. It localises to the centromere. Its subcellular location is the kinetochore. It is found in the cleavage furrow. The protein localises to the cytoplasmic vesicle membrane. In terms of biological role, required for centrosome duplication and formation and function of the mitotic spindle. Essential for the development of the cerebral cortex. May regulate the production of neurons by controlling the orientation of the mitotic spindle during division of cortical neuronal progenitors of the proliferative ventricular zone of the brain. Orientation of the division plane perpendicular to the layers of the cortex gives rise to two proliferative neuronal progenitors whereas parallel orientation of the division plane yields one proliferative neuronal progenitor and a postmitotic neuron. A premature shift towards a neuronal fate within the progenitor population may result in an overall reduction in the final number of neurons and an increase in the number of neurons in the deeper layers of the cortex. Acts as a RAB9A/B effector that tethers RAB9-associated late endosomes to the dynein motor for their retrograde transport to the trans-Golgi network. This Mus musculus (Mouse) protein is Nuclear distribution protein nudE homolog 1.